Consider the following 538-residue polypeptide: Hydroxylamine reductase (538 aa).

Positions 3, 6, 15, and 21 each coordinate [4Fe-4S] cluster. Histidine 239, glutamate 263, cysteine 307, cysteine 394, cysteine 422, cysteine 447, glutamate 481, and lysine 483 together coordinate hybrid [4Fe-2O-2S] cluster. Residue cysteine 394 is modified to Cysteine persulfide.

It belongs to the HCP family. [4Fe-4S] cluster serves as cofactor. The cofactor is hybrid [4Fe-2O-2S] cluster.

It localises to the cytoplasm. It carries out the reaction A + NH4(+) + H2O = hydroxylamine + AH2 + H(+). Functionally, catalyzes the reduction of hydroxylamine to form NH(3) and H(2)O. This Solidesulfovibrio magneticus (strain ATCC 700980 / DSM 13731 / RS-1) (Desulfovibrio magneticus) protein is Hydroxylamine reductase.